A 449-amino-acid polypeptide reads, in one-letter code: Probable glycine dehydrogenase (decarboxylating) subunit 1 (449 aa).

Belongs to the GcvP family. N-terminal subunit subfamily. In terms of assembly, the glycine cleavage system is composed of four proteins: P, T, L and H. In this organism, the P 'protein' is a heterodimer of two subunits.

The enzyme catalyses N(6)-[(R)-lipoyl]-L-lysyl-[glycine-cleavage complex H protein] + glycine + H(+) = N(6)-[(R)-S(8)-aminomethyldihydrolipoyl]-L-lysyl-[glycine-cleavage complex H protein] + CO2. Its function is as follows. The glycine cleavage system catalyzes the degradation of glycine. The P protein binds the alpha-amino group of glycine through its pyridoxal phosphate cofactor; CO(2) is released and the remaining methylamine moiety is then transferred to the lipoamide cofactor of the H protein. The chain is Probable glycine dehydrogenase (decarboxylating) subunit 1 from Pyrococcus abyssi (strain GE5 / Orsay).